A 901-amino-acid polypeptide reads, in one-letter code: Nuclear factor of activated T-cells, cytoplasmic 4 (901 aa).

Disordered stretches follow at residues 15-179 (LVFG…LSSW) and 203-362 (NEAA…EDSV). Over residues 61–81 (IPRPPPPRPGMHSPPPRPAPS) the composition is skewed to pro residues. Residues 96–109 (GGPGGNAGGAGGGR) are compositionally biased toward gly residues. Residues 114 to 119 (PSIRIT) form a calcineurin-binding region. Positions 114–123 (PSIRITSISP) are enriched in low complexity. Residues 151 to 165 (GFGGYREAGGQGGGA) are compositionally biased toward gly residues. Positions 166 to 179 (FFSPSPGSSSLSSW) are enriched in low complexity. 2 positions are modified to phosphoserine; by MAPK7 and MAPK14: Ser-168 and Ser-170. A phosphoserine; by MAPK8 and MAPK9 mark is found at Ser-213 and Ser-217. One copy of the SP 1 repeat lies at 213–229 (SPLPSPRASPRPWTPED). The interval 213-293 (SPLPSPRASP…LSRRGSLGEE (81 aa)) is 2 approximate SP repeats. Pro residues-rich tracts occupy residues 215-227 (LPSPRASPRPWTP) and 254-263 (GPVPASPRPA). A Nuclear localization signal motif is present at residues 268 to 270 (KRR). The span at 272 to 288 (SSSGTPSSASPALSRRG) shows a compositional bias: low complexity. An SP 2; approximate repeat occupies 277 to 293 (PSSASPALSRRGSLGEE). Ser-289 bears the Phosphoserine mark. Ser-334 bears the Phosphoserine; by RPS6KA3 mark. The residue at position 344 (Ser-344) is a Phosphoserine. The 182-residue stretch at 401–582 (SALPPLDWPL…VPIECSQRSA (182 aa)) folds into the RHD domain. The DNA-binding element occupies 430-437 (RAHYETEG). One can recognise an IPT/TIG domain in the interval 586–683 (PQVETYSPSA…KRSPTQSFKF (98 aa)). A Nuclear localization signal motif is present at residues 672–674 (RRK). Residue Lys-689 forms a Glycyl lysine isopeptide (Lys-Gly) (interchain with G-Cter in SUMO2) linkage. Disordered regions lie at residues 695–721 (DSSLRGFPSTSGPPFGPDVDFSPPRPP) and 827–869 (PQSA…FRDS).

Member of the multicomponent NFATC transcription complex that consists of at least two components, a pre-existing cytoplasmic component NFATC2 and an inducible nuclear component NFATC1. Other NFAT proteins, such as NFATC3, or members of the activating protein-1 (AP-1) family and MAF can also bind the complex. NFAT proteins can bind DNA as monomers or dimers. Component of a promoter-binding complex composed of STAT3, NFATC3 and NFATC4; complex formation is enhanced by calcineurin. Interacts with CREBBP; this interaction potentiates transcription activation. Interacts with MAPK8/JNK1 and MAPK9/JNK2. Interacts with GATA4 (via the second Zn finger). Interacts (via N-terminus) with IRAK1 (via C-terminus). Interacts with RPS6KA3. Interacts with HOMER1, HOMER2 and HOMER3; this interaction competes with calcineurin/PPP3CA-binding and hence prevents NFATC4 dephosphorylation and activation. Interacts with ESR1 and ESR2; this interaction decreases NFATC4 transcriptional activity. Interacts with MTOR and MAPK7/ERK5. Interacts with TRIM17; this interaction prevents NFATC3 nuclear localization. Interacts with TCF25 (via C-terminus); the interaction leads to suppression of NFATC4 transcription factor activity and is reduced following stimulation with angiotensin-2. In terms of processing, phosphorylated by NFATC-kinases; dephosphorylated by calcineurin/PPP3CA. Phosphorylated on Ser-168 and Ser-170 by MTOR, IRAK1, MAPK7/ERK5 and MAPK14/p38, on Ser-213 and Ser-217 by MAPK8 and MAPK9, and on Ser-289 and Ser-344 by RPS6KA3. Phosphorylated by GSK3B. Phosphorylation by GSK3B markedly increases NFATC4 ubiquitination. Phosphorylation by MAPK8/JNK1, MAPK9/JNK2 and RPS6KA3 may stimulate NFATC4 transcriptional activity. Phosphorylation at Ser-168 and Ser-170 is stimulated by UV irradiation. Post-translationally, ubiquitinated, leading to degradation by the proteasome. Ubiquitination may be stimulated by GSK3B-dependent phosphorylation. Polyubiquitin linkage mainly occurs through 'Lys-48'. In terms of tissue distribution, widely expressed. In the brain, expressed in neurons. Expressed in the hippocampus (at protein level). In the hippocampus, expressed in both the CA1-CA3 pyramidal cells and the dentate gyrus granular cells. Expressed in a subset of hippocampal cells representing adult-born neurons (at protein level). Expressed in the submandibular gland (at protein level). In the olfactory system, expressed at low levels in the glomerular and granular layers and in the mitral cell layer. In the cerebellum, expressed at moderate levels in granular neurons. Expressed at moderate levels in the choroid plexus and ependymal cells. Expressed in neurons of the cochlear nucleus (at protein level). Expressed at low levels in the heart (at protein level). Expressed in ventricular cardiomyocytes (at protein level). Expressed in the lung.

The protein localises to the cytoplasm. Its subcellular location is the nucleus. In terms of biological role, ca(2+)-regulated transcription factor that is involved in several processes, including the development and function of the immune, cardiovascular, musculoskeletal, and nervous systems. Involved in T-cell activation, stimulating the transcription of cytokine genes, including that of IL2 and IL4. Following JAK/STAT signaling activation and as part of a complex with NFATC3 and STAT3, binds to the alpha-beta E4 promoter region of CRYAB and activates transcription in cardiomyocytes. Along with NFATC3, involved in embryonic heart development. Involved in mitochondrial energy metabolism required for cardiac morphogenesis and function. Transactivates many genes involved in heart physiology. Along with GATA4, binds to and activates NPPB/BNP promoter. Activates NPPA/ANP/ANF and MYH7/beta-MHC transcription. Binds to and transactivates AGTR2 gene promoter. Involved in the regulation of adult hippocampal neurogenesis. Involved in BDNF-driven pro-survival signaling in hippocampal adult-born neurons. Involved in the formation of long-term spatial memory and long-term potentiation. In cochlear nucleus neurons, may play a role in deafferentation-induced apoptosis during a developmental critical period when auditory neurons depend on afferent input for survival. Binds to and activates the BACE1/Beta-secretase 1 promoter, hence may regulate the proteolytic processing of the amyloid precursor protein (APP). Plays a role in adipocyte differentiation. May be involved in myoblast differentiation into myotubes. Binds the consensus DNA sequence 5'-GGAAAAT-3'. In the presence of CREBBP, activates TNF transcription. Binds to PPARG gene promoter and regulates its activity. Binds to PPARG and REG3G gene promoters. This chain is Nuclear factor of activated T-cells, cytoplasmic 4, found in Mus musculus (Mouse).